The chain runs to 164 residues: Kunitz-type serine protease inhibitor BbKI (164 aa).

This sequence belongs to the protease inhibitor I3 (leguminous Kunitz-type inhibitor) family. In terms of assembly, monomer.

The protein localises to the secreted. Functionally, inhibits bovine trypsin, human plasma kallikrein and plasmin and weakly bovine chymotrypsin. The chain is Kunitz-type serine protease inhibitor BbKI from Bauhinia bauhinioides (Perlebia bauhinoides).